Consider the following 362-residue polypeptide: Heat-inducible transcription repressor HrcA (362 aa).

It belongs to the HrcA family.

Its function is as follows. Negative regulator of class I heat shock genes (grpE-dnaK-dnaJ and groELS operons). Prevents heat-shock induction of these operons. The sequence is that of Heat-inducible transcription repressor HrcA from Rhizobium etli (strain CIAT 652).